A 229-amino-acid chain; its full sequence is Uracil-DNA glycosylase (229 aa).

The active-site Proton acceptor is the Asp72.

This sequence belongs to the uracil-DNA glycosylase (UDG) superfamily. UNG family.

It localises to the cytoplasm. It carries out the reaction Hydrolyzes single-stranded DNA or mismatched double-stranded DNA and polynucleotides, releasing free uracil.. Its function is as follows. Excises uracil residues from the DNA which can arise as a result of misincorporation of dUMP residues by DNA polymerase or due to deamination of cytosine. The polypeptide is Uracil-DNA glycosylase (Dichelobacter nodosus (strain VCS1703A)).